The primary structure comprises 60 residues: Cecropin-B type 2 (60 aa).

Positions 1–24 (MNFSKLFALVLLIGLVLLTGQTEA) are cleaved as a signal peptide. Ile58 carries the isoleucine amide modification.

The protein belongs to the cecropin family.

Its subcellular location is the secreted. Functionally, cecropins have lytic and antibacterial activity against several Gram-positive and Gram-negative bacteria. The protein is Cecropin-B type 2 (CECB2) of Aedes albopictus (Asian tiger mosquito).